The following is a 233-amino-acid chain: Phosphoribosylformylglycinamidine synthase subunit PurQ (233 aa).

The Glutamine amidotransferase type-1 domain maps to 3–233 (AAILVFPGIN…GLAQHLEKAA (231 aa)). Catalysis depends on C87, which acts as the Nucleophile. Residues H204 and E206 contribute to the active site.

As to quaternary structure, part of the FGAM synthase complex composed of 1 PurL, 1 PurQ and 2 PurS subunits.

The protein resides in the cytoplasm. The catalysed reaction is N(2)-formyl-N(1)-(5-phospho-beta-D-ribosyl)glycinamide + L-glutamine + ATP + H2O = 2-formamido-N(1)-(5-O-phospho-beta-D-ribosyl)acetamidine + L-glutamate + ADP + phosphate + H(+). It catalyses the reaction L-glutamine + H2O = L-glutamate + NH4(+). It functions in the pathway purine metabolism; IMP biosynthesis via de novo pathway; 5-amino-1-(5-phospho-D-ribosyl)imidazole from N(2)-formyl-N(1)-(5-phospho-D-ribosyl)glycinamide: step 1/2. In terms of biological role, part of the phosphoribosylformylglycinamidine synthase complex involved in the purines biosynthetic pathway. Catalyzes the ATP-dependent conversion of formylglycinamide ribonucleotide (FGAR) and glutamine to yield formylglycinamidine ribonucleotide (FGAM) and glutamate. The FGAM synthase complex is composed of three subunits. PurQ produces an ammonia molecule by converting glutamine to glutamate. PurL transfers the ammonia molecule to FGAR to form FGAM in an ATP-dependent manner. PurS interacts with PurQ and PurL and is thought to assist in the transfer of the ammonia molecule from PurQ to PurL. The sequence is that of Phosphoribosylformylglycinamidine synthase subunit PurQ from Bradyrhizobium diazoefficiens (strain JCM 10833 / BCRC 13528 / IAM 13628 / NBRC 14792 / USDA 110).